The following is a 548-amino-acid chain: Copine-2 (548 aa).

C2 domains lie at 6-131 (DGGA…TRPL) and 138-263 (PAGK…PLEI). Ca(2+) is bound by residues D39, D45, D97, D99, S102, D109, D170, D176, D232, D234, and D240. Residues 247–304 (TSVLQMSEARDGVPLEIECINPKKQRKKKSYKNSGIIILRSCKIHRNYSFLDYILGGC) form a linker region region. The VWFA domain maps to 305 to 507 (QLMFTVGIDF…AARDIVQFVP (203 aa)).

Belongs to the copine family. It depends on Ca(2+) as a cofactor.

The protein resides in the cytoplasm. It is found in the nucleus. Its subcellular location is the cell membrane. Its function is as follows. Calcium-dependent phospholipid-binding protein that plays a role in calcium-mediated intracellular processes. Exhibits calcium-dependent cell membrane binding properties. The sequence is that of Copine-2 from Mus musculus (Mouse).